Consider the following 429-residue polypeptide: Adenylosuccinate synthetase (429 aa).

GTP contacts are provided by residues 12–18 (GDEGKGK) and 40–42 (GHT). Asp-13 (proton acceptor) is an active-site residue. Mg(2+) contacts are provided by Asp-13 and Gly-40. Residues 13-16 (DEGK), 38-41 (NAGH), Thr-128, Arg-142, Gln-223, Thr-238, and Arg-302 contribute to the IMP site. His-41 serves as the catalytic Proton donor. 298–304 (VNTGRPR) lines the substrate pocket. Residues Arg-304, 330–332 (KLD), and 412–414 (GVG) each bind GTP.

The protein belongs to the adenylosuccinate synthetase family. In terms of assembly, homodimer. Mg(2+) serves as cofactor.

The protein localises to the cytoplasm. The catalysed reaction is IMP + L-aspartate + GTP = N(6)-(1,2-dicarboxyethyl)-AMP + GDP + phosphate + 2 H(+). It participates in purine metabolism; AMP biosynthesis via de novo pathway; AMP from IMP: step 1/2. Plays an important role in the de novo pathway of purine nucleotide biosynthesis. Catalyzes the first committed step in the biosynthesis of AMP from IMP. The chain is Adenylosuccinate synthetase from Kocuria rhizophila (strain ATCC 9341 / DSM 348 / NBRC 103217 / DC2201).